A 156-amino-acid polypeptide reads, in one-letter code: ATP synthase subunit b (156 aa).

Residues 11–31 traverse the membrane as a helical segment; that stretch reads AIAFILFVWFCMKYVWPPLMA.

This sequence belongs to the ATPase B chain family. F-type ATPases have 2 components, F(1) - the catalytic core - and F(0) - the membrane proton channel. F(1) has five subunits: alpha(3), beta(3), gamma(1), delta(1), epsilon(1). F(0) has three main subunits: a(1), b(2) and c(10-14). The alpha and beta chains form an alternating ring which encloses part of the gamma chain. F(1) is attached to F(0) by a central stalk formed by the gamma and epsilon chains, while a peripheral stalk is formed by the delta and b chains.

The protein resides in the cell inner membrane. Functionally, f(1)F(0) ATP synthase produces ATP from ADP in the presence of a proton or sodium gradient. F-type ATPases consist of two structural domains, F(1) containing the extramembraneous catalytic core and F(0) containing the membrane proton channel, linked together by a central stalk and a peripheral stalk. During catalysis, ATP synthesis in the catalytic domain of F(1) is coupled via a rotary mechanism of the central stalk subunits to proton translocation. Its function is as follows. Component of the F(0) channel, it forms part of the peripheral stalk, linking F(1) to F(0). The polypeptide is ATP synthase subunit b (Enterobacter sp. (strain 638)).